We begin with the raw amino-acid sequence, 113 residues long: Insulin-like peptide 02 (113 aa).

A signal peptide spans methionine 1–proline 22. A propeptide spanning residues valine 23–arginine 42 is cleaved from the precursor. 3 disulfides stabilise this stretch: cysteine 44/cysteine 99, cysteine 56/cysteine 112, and cysteine 98/cysteine 103. The propeptide at arginine 62 to arginine 87 is c peptide.

The protein belongs to the insulin family.

The protein resides in the secreted. Its function is as follows. Insulin decreases blood glucose concentration. May have evolved to activate insulin receptors (INSR) in vertebrates. Molecular docking studies reveals unique interaction with the human insulin receptor. In vivo, insulin-like peptide injection reduces blood glucose levels in two models of zebrafish diabetes (streptozotocin- and glucose-induced). Also shorter swimming distance of zebrafish larvae, an effect which is not observed with human insulin. This chain is Insulin-like peptide 02, found in Exaiptasia diaphana (Tropical sea anemone).